The following is a 228-amino-acid chain: ATP-dependent dethiobiotin synthetase BioD (228 aa).

12–17 (DVGKTY) lines the ATP pocket. Threonine 16 is a Mg(2+) binding site. Residue lysine 37 is part of the active site. ATP-binding positions include aspartate 53, 114–117 (EGMG), 174–175 (ND), 203–205 (PFI), and asparagine 210. Residues aspartate 53 and glutamate 114 each contribute to the Mg(2+) site.

Belongs to the dethiobiotin synthetase family. In terms of assembly, homodimer. Mg(2+) serves as cofactor.

It is found in the cytoplasm. The catalysed reaction is (7R,8S)-7,8-diammoniononanoate + CO2 + ATP = (4R,5S)-dethiobiotin + ADP + phosphate + 3 H(+). It functions in the pathway cofactor biosynthesis; biotin biosynthesis; biotin from 7,8-diaminononanoate: step 1/2. Functionally, catalyzes a mechanistically unusual reaction, the ATP-dependent insertion of CO2 between the N7 and N8 nitrogen atoms of 7,8-diaminopelargonic acid (DAPA, also called 7,8-diammoniononanoate) to form a ureido ring. The polypeptide is ATP-dependent dethiobiotin synthetase BioD (Nitrosopumilus maritimus (strain SCM1)).